The primary structure comprises 610 residues: Aspercryptin biosynthesis cluster-specific transcription regulator atnN (610 aa).

Over residues 1–26 the composition is skewed to polar residues; the sequence is MAPKDSQVSASNEMTGNPPSSVQGRS. A disordered region spans residues 1-27; that stretch reads MAPKDSQVSASNEMTGNPPSSVQGRSR. Positions 30-57 form a DNA-binding region, zn(2)-C6 fungal-type; it reads CITCRIRRVKCDEERPHCRRCQSTGRKC. Disordered stretches follow at residues 61–81 and 427–493; these read TPLT…KAGS and AGST…LPRP. Composition is skewed to low complexity over residues 66–79 and 437–474; these read QQPK…AAKA and SRAG…TPTP.

It localises to the nucleus. In terms of biological role, transcription factor that positively regulates the cluster that mediate the production of aspercryptins, linear lipopeptides built from six amino acids including 2 highly unusual and nonproteogenic amino acids, 2-amino-octanoic acid (2aoa) and 2-amino-dodecanol (2adol). This is Aspercryptin biosynthesis cluster-specific transcription regulator atnN from Emericella nidulans (strain FGSC A4 / ATCC 38163 / CBS 112.46 / NRRL 194 / M139) (Aspergillus nidulans).